A 505-amino-acid polypeptide reads, in one-letter code: Protein nucleotidyltransferase YdiU (505 aa).

ATP-binding residues include Gly102, Gly104, Arg105, Lys125, Asp137, Gly138, Arg188, and Arg195. Residue Asp264 is the Proton acceptor of the active site. Residues Asn265 and Asp274 each coordinate Mg(2+). Asp274 contributes to the ATP binding site.

It belongs to the SELO family. Requires Mg(2+) as cofactor. Mn(2+) serves as cofactor.

The catalysed reaction is L-seryl-[protein] + ATP = 3-O-(5'-adenylyl)-L-seryl-[protein] + diphosphate. It catalyses the reaction L-threonyl-[protein] + ATP = 3-O-(5'-adenylyl)-L-threonyl-[protein] + diphosphate. It carries out the reaction L-tyrosyl-[protein] + ATP = O-(5'-adenylyl)-L-tyrosyl-[protein] + diphosphate. The enzyme catalyses L-histidyl-[protein] + UTP = N(tele)-(5'-uridylyl)-L-histidyl-[protein] + diphosphate. The catalysed reaction is L-seryl-[protein] + UTP = O-(5'-uridylyl)-L-seryl-[protein] + diphosphate. It catalyses the reaction L-tyrosyl-[protein] + UTP = O-(5'-uridylyl)-L-tyrosyl-[protein] + diphosphate. In terms of biological role, nucleotidyltransferase involved in the post-translational modification of proteins. It can catalyze the addition of adenosine monophosphate (AMP) or uridine monophosphate (UMP) to a protein, resulting in modifications known as AMPylation and UMPylation. This is Protein nucleotidyltransferase YdiU from Nitrobacter winogradskyi (strain ATCC 25391 / DSM 10237 / CIP 104748 / NCIMB 11846 / Nb-255).